The sequence spans 370 residues: Mitochondrial carrier protein SCaMC-3L (370 aa).

3 Solcar repeats span residues Glu-90–Tyr-176, Pro-184–Phe-269, and Pro-280–Thr-367. Helical transmembrane passes span Leu-96–Leu-113, Gly-151–Phe-170, Ser-194–Met-207, Tyr-245–Tyr-263, Gly-282–Val-306, and Gly-342–Tyr-361.

It belongs to the mitochondrial carrier (TC 2.A.29) family.

The protein localises to the mitochondrion inner membrane. It carries out the reaction Mg(2+)(out) + phosphate(in) + ATP(out) = Mg(2+)(in) + phosphate(out) + ATP(in). The enzyme catalyses ADP(out) + phosphate(in) + H(+)(out) = ADP(in) + phosphate(out) + H(+)(in). Calcium-independent ATP-Mg/Pi exchanger that catalyzes the electroneutral exchange of Mg-ATP or free ADP against an hydrogenphosphate and participates in the net transport of adenine nucleotides across the mitochondria inner membrane. The protein is Mitochondrial carrier protein SCaMC-3L of Homo sapiens (Human).